A 317-amino-acid polypeptide reads, in one-letter code: Nucleoside ABC transporter permease protein NupC (317 aa).

A run of 10 helical transmembrane segments spans residues 9–29, 35–55, 62–82, 98–118, 132–151, 155–172, 203–223, 225–245, 251–271, and 286–306; these read IIVA…IGGV, GIVN…SVVF, MFGS…GALF, IVSG…LLQV, GYWN…IFFT, LPGF…YVLF, AGVL…AQAI, GNFS…AMIF, IGAM…VVGG, and MAPY…AIAP.

Belongs to the binding-protein-dependent transport system permease family. As to quaternary structure, the complex is composed of two ATP-binding proteins (NupA), two transmembrane proteins (NupB and NupC) and a solute-binding protein (BmpA).

The protein resides in the cell membrane. Part of an ABC transporter complex involved in the uptake of all common nucleosides. Responsible for the translocation of the substrate across the membrane. This is Nucleoside ABC transporter permease protein NupC from Lactococcus lactis subsp. cremoris (strain MG1363).